We begin with the raw amino-acid sequence, 202 residues long: Protein-methionine-sulfoxide reductase heme-binding subunit MsrQ (202 aa).

The next 6 helical transmembrane spans lie at 8–28, 42–62, 75–95, 110–130, 147–167, and 169–189; these read LAVFLGALAVPAWWLYQAWIF, LGLGALVLLLLTLAMTPLQKL, LGLWCFTYVLLHLSAYYVFIL, PYIIVGMLGFVCLFLLAITSN, LVYLILGLGLLHMLWVVRADL, and EWTLYAVVGASLMLLRLPSIA.

The protein belongs to the MsrQ family. Heterodimer of a catalytic subunit (MsrP) and a heme-binding subunit (MsrQ). FMN is required as a cofactor. Requires heme b as cofactor.

It localises to the cell inner membrane. Functionally, part of the MsrPQ system that repairs oxidized periplasmic proteins containing methionine sulfoxide residues (Met-O), using respiratory chain electrons. Thus protects these proteins from oxidative-stress damage caused by reactive species of oxygen and chlorine generated by the host defense mechanisms. MsrPQ is essential for the maintenance of envelope integrity under bleach stress, rescuing a wide series of structurally unrelated periplasmic proteins from methionine oxidation. MsrQ provides electrons for reduction to the reductase catalytic subunit MsrP, using the quinone pool of the respiratory chain. This chain is Protein-methionine-sulfoxide reductase heme-binding subunit MsrQ, found in Pseudomonas aeruginosa (strain ATCC 15692 / DSM 22644 / CIP 104116 / JCM 14847 / LMG 12228 / 1C / PRS 101 / PAO1).